A 395-amino-acid chain; its full sequence is MGILGLSKLLYDKSPNAIREQELKNFFGRRIAIDASMSIYQFIIAMKGFQDGQGLELTNEKGDVTSHLNGLFARTLRMIDEGIKPIYVFDGKPPKLKADELEMRRQKAAEAEREFEKAKDAGDDEMMEKMSKRTVRVSRDQIDESKKLLRLMGIPVIQAPSEAEAQCAELVKKGKAWAVGTEDMDALTFGSTVMLRHLNISDAKKRPIAEIHLDEVLQITGLSMGQFVDLCILLGCDYVPKVPGIGPQKAWEGIQRYGSIESFLESLDTTKHPVPADFYYKEARAFFQNPEVTPAEEINIQFSEPDEVGLIQFLVKEKLFNPDRVNKGIARLRAALTRKTQGRLDSFFTVTKVPQQTAAARAPLAGTKRPRDGKYVHVSGTLRKATSGHKKAVKK.

Residues 1-108 (MGILGLSKLL…DELEMRRQKA (108 aa)) form an N-domain region. Asp-34 contributes to the Mg(2+) binding site. Arg-74 contributes to the DNA binding site. Mg(2+)-binding residues include Asp-90, Glu-162, Glu-164, Asp-183, and Asp-185. An I-domain region spans residues 126–257 (MMEKMSKRTV…QKAWEGIQRY (132 aa)). A DNA-binding site is contributed by Glu-162. Residues Gly-235 and Asp-237 each contribute to the DNA site. Asp-237 is a Mg(2+) binding site. The interaction with PCNA stretch occupies residues 340–348 (TQGRLDSFF).

Belongs to the XPG/RAD2 endonuclease family. FEN1 subfamily. Interacts with PCNA. Three molecules of FEN1 bind to one PCNA trimer with each molecule binding to one PCNA monomer. PCNA stimulates the nuclease activity without altering cleavage specificity. Mg(2+) serves as cofactor. In terms of processing, phosphorylated. Phosphorylation upon DNA damage induces relocalization to the nuclear plasma.

The protein resides in the nucleus. It localises to the nucleolus. Its subcellular location is the nucleoplasm. The protein localises to the mitochondrion. Its function is as follows. Structure-specific nuclease with 5'-flap endonuclease and 5'-3' exonuclease activities involved in DNA replication and repair. During DNA replication, cleaves the 5'-overhanging flap structure that is generated by displacement synthesis when DNA polymerase encounters the 5'-end of a downstream Okazaki fragment. It enters the flap from the 5'-end and then tracks to cleave the flap base, leaving a nick for ligation. Also involved in the long patch base excision repair (LP-BER) pathway, by cleaving within the apurinic/apyrimidinic (AP) site-terminated flap. Acts as a genome stabilization factor that prevents flaps from equilibrating into structures that lead to duplications and deletions. Also possesses 5'-3' exonuclease activity on nicked or gapped double-stranded DNA, and exhibits RNase H activity. Also involved in replication and repair of rDNA and in repairing mitochondrial DNA. This chain is Flap endonuclease 1, found in Leishmania infantum.